Reading from the N-terminus, the 88-residue chain is Probable glutaredoxin ssr2061 (88 aa).

A disulfide bond links C15 and C18.

It belongs to the glutaredoxin family.

Its function is as follows. Has a glutathione-disulfide oxidoreductase activity in the presence of NADPH and glutathione reductase. Reduces low molecular weight disulfides and proteins. The polypeptide is Probable glutaredoxin ssr2061 (Synechocystis sp. (strain ATCC 27184 / PCC 6803 / Kazusa)).